A 232-amino-acid chain; its full sequence is Dehydrogenase OXI1 (232 aa).

The N-terminal stretch at 1–20 is a signal peptide; that stretch reads MTETFKVAITFVSPSSEALA. L19 serves as a coordination point for NADP(+). The N-linked (GlcNAc...) asparagine glycan is linked to N28. NADP(+)-binding residues include D42, N70, and K103. An N-linked (GlcNAc...) asparagine glycan is attached at N117. Residues S119 and S121 each act as proton donor in the active site. The NADP(+) site is built by Y133, K137, and T168. Y133 serves as the catalytic Proton acceptor. Residue K137 is the Lowers pKa of active site Tyr of the active site.

This sequence belongs to the short-chain dehydrogenases/reductases (SDR) family.

It carries out the reaction a primary alcohol + NAD(+) = an aldehyde + NADH + H(+). It catalyses the reaction a secondary alcohol + NAD(+) = a ketone + NADH + H(+). It functions in the pathway mycotoxin biosynthesis. Dehydrogenase; part of the Tox1A locus, one of the 2 loci that mediate the biosynthesis of T-toxin, a family of linear polyketides 37 to 45 carbons in length, of which the major component is 41 carbons, and which leads to high virulence to maize. One of the PKSs (PKS1 or PKS2) could synthesize a precursor, used subsequently by the other PKS as starter unit, to add additional carbons. Variability in the length of the final carbon backbone C35-47 could be achieved by varying the number of condensation cycles, or use of different starter or extender units or might be due to decarboxylation of the penultimate product, catalyzed by DEC1. Additional proteins are required for the biosynthesis of T-toxin, including oxidoreductases RED1, RED2, RED3, LAM1 and OXI1, as well as esterase TOX9. This is Dehydrogenase OXI1 from Cochliobolus heterostrophus (strain C4 / ATCC 48331 / race T) (Southern corn leaf blight fungus).